The primary structure comprises 104 residues: Large ribosomal subunit protein uL24 (104 aa).

Belongs to the universal ribosomal protein uL24 family. Part of the 50S ribosomal subunit.

In terms of biological role, one of two assembly initiator proteins, it binds directly to the 5'-end of the 23S rRNA, where it nucleates assembly of the 50S subunit. One of the proteins that surrounds the polypeptide exit tunnel on the outside of the subunit. The protein is Large ribosomal subunit protein uL24 of Bradyrhizobium diazoefficiens (strain JCM 10833 / BCRC 13528 / IAM 13628 / NBRC 14792 / USDA 110).